The sequence spans 148 residues: Small ribosomal subunit protein uS15 (148 aa).

The protein belongs to the universal ribosomal protein uS15 family.

The sequence is that of Small ribosomal subunit protein uS15 (RPS13) from Encephalitozoon cuniculi (strain GB-M1) (Microsporidian parasite).